A 398-amino-acid chain; its full sequence is Na(+)/H(+) antiporter NhaA (398 aa).

The next 11 helical transmembrane spans lie at isoleucine 19 to glycine 39, leucine 64 to leucine 84, isoleucine 99 to alanine 119, glycine 130 to glycine 150, isoleucine 159 to phenylalanine 179, asparagine 182 to valine 202, isoleucine 222 to isoleucine 242, alanine 266 to isoleucine 286, isoleucine 299 to valine 319, glycine 337 to phenylalanine 357, and leucine 370 to threonine 390.

It belongs to the NhaA Na(+)/H(+) (TC 2.A.33) antiporter family.

It is found in the cell inner membrane. The catalysed reaction is Na(+)(in) + 2 H(+)(out) = Na(+)(out) + 2 H(+)(in). In terms of biological role, na(+)/H(+) antiporter that extrudes sodium in exchange for external protons. This Desulfotalea psychrophila (strain LSv54 / DSM 12343) protein is Na(+)/H(+) antiporter NhaA.